The sequence spans 171 residues: uncharacterized protein (171 aa).

It belongs to the IUNH family.

This is an uncharacterized protein from Acidianus ambivalens (Desulfurolobus ambivalens).